Reading from the N-terminus, the 258-residue chain is tRNA (guanine-N(1)-)-methyltransferase (258 aa).

S-adenosyl-L-methionine-binding positions include Gly122 and 142–147 (LGDFVL).

The protein belongs to the RNA methyltransferase TrmD family. Homodimer.

Its subcellular location is the cytoplasm. It catalyses the reaction guanosine(37) in tRNA + S-adenosyl-L-methionine = N(1)-methylguanosine(37) in tRNA + S-adenosyl-L-homocysteine + H(+). Its function is as follows. Specifically methylates guanosine-37 in various tRNAs. The chain is tRNA (guanine-N(1)-)-methyltransferase from Hahella chejuensis (strain KCTC 2396).